The following is an 815-amino-acid chain: Probable bifunctional folylpolyglutamate synthase/dihydropteroate synthase (815 aa).

A folylpolyglutamate synthase region spans residues 1-416; that stretch reads MRYDEAANFL…LVAGSLFAVA (416 aa). 47–53 is a binding site for ATP; it reads GSNGKGS. In terms of domain architecture, Pterin-binding spans 553 to 803; it reads TAVMGILNVT…DVPENVAAVR (251 aa). Residues 555-815 are DHPS; that stretch reads VMGILNVTPD…EATRTGADAE (261 aa). N560 provides a ligand contact to Mg(2+). Residues T600, D633, N652, D722, K758, and 791–793 contribute to the (7,8-dihydropterin-6-yl)methyl diphosphate site; that span reads RVH.

The protein in the N-terminal section; belongs to the folylpolyglutamate synthase family. It in the C-terminal section; belongs to the DHPS family. Requires Mg(2+) as cofactor.

It carries out the reaction (6S)-5,6,7,8-tetrahydrofolyl-(gamma-L-Glu)(n) + L-glutamate + ATP = (6S)-5,6,7,8-tetrahydrofolyl-(gamma-L-Glu)(n+1) + ADP + phosphate + H(+). It catalyses the reaction (7,8-dihydropterin-6-yl)methyl diphosphate + 4-aminobenzoate = 7,8-dihydropteroate + diphosphate. It functions in the pathway cofactor biosynthesis; tetrahydrofolylpolyglutamate biosynthesis. The protein operates within cofactor biosynthesis; tetrahydrofolate biosynthesis; 7,8-dihydrofolate from 2-amino-4-hydroxy-6-hydroxymethyl-7,8-dihydropteridine diphosphate and 4-aminobenzoate: step 1/2. Functionally, can complement an H.volcanii mutant strain that is thymidine auxotroph because it lacks the two dihydrofolate reductase genes encoded by hdrA and hdrB. This is Probable bifunctional folylpolyglutamate synthase/dihydropteroate synthase (folP) from Halobacterium salinarum (strain ATCC 700922 / JCM 11081 / NRC-1) (Halobacterium halobium).